Reading from the N-terminus, the 162-residue chain is Transcription elongation factor GreA (162 aa).

Residues 45–74 (ENAEYEAAREKQAFIEGRIKELEDMTARAE) are a coiled coil.

Belongs to the GreA/GreB family.

Functionally, necessary for efficient RNA polymerase transcription elongation past template-encoded arresting sites. The arresting sites in DNA have the property of trapping a certain fraction of elongating RNA polymerases that pass through, resulting in locked ternary complexes. Cleavage of the nascent transcript by cleavage factors such as GreA or GreB allows the resumption of elongation from the new 3'terminus. GreA releases sequences of 2 to 3 nucleotides. This is Transcription elongation factor GreA from Rickettsia prowazekii (strain Madrid E).